The chain runs to 405 residues: Argininosuccinate synthase (405 aa).

ATP-binding positions include 10–18 and alanine 37; that span reads AYSGGLDTS. The L-citrulline site is built by tyrosine 88 and serine 93. An ATP-binding site is contributed by glycine 118. 3 residues coordinate L-aspartate: threonine 120, asparagine 124, and aspartate 125. Position 124 (asparagine 124) interacts with L-citrulline. L-citrulline-binding residues include arginine 128, serine 179, serine 188, glutamate 264, and tyrosine 276.

The protein belongs to the argininosuccinate synthase family. Type 1 subfamily. Homotetramer.

The protein resides in the cytoplasm. It carries out the reaction L-citrulline + L-aspartate + ATP = 2-(N(omega)-L-arginino)succinate + AMP + diphosphate + H(+). The protein operates within amino-acid biosynthesis; L-arginine biosynthesis; L-arginine from L-ornithine and carbamoyl phosphate: step 2/3. This Pseudomonas fluorescens (strain ATCC BAA-477 / NRRL B-23932 / Pf-5) protein is Argininosuccinate synthase.